Reading from the N-terminus, the 626-residue chain is Phosphoenolpyruvate carboxykinase (ATP) 2 (626 aa).

Disordered stretches follow at residues 1–23 (MASP…APVN) and 64–86 (PNLV…KHQQ). An ATP-binding site is contributed by 324–331 (GLSGTGKT).

Belongs to the phosphoenolpyruvate carboxykinase (ATP) family. As to quaternary structure, homohexamer.

It is found in the cytoplasm. It catalyses the reaction oxaloacetate + ATP = phosphoenolpyruvate + ADP + CO2. It participates in carbohydrate biosynthesis; gluconeogenesis. This Urochloa panicoides (Panic liverseed grass) protein is Phosphoenolpyruvate carboxykinase (ATP) 2 (PCK2).